Here is a 295-residue protein sequence, read N- to C-terminus: MKQTTINHSVELVGIGLHKGVPVKLVLEPLEENQGIVFYRSDLGVKLPLKPENIVDTKMATVLGKDNARISTIEHLLSAVHAYGIDNLKISVDNEEIPIMDGSALTYCMLLDEAGIKELDAPKKVMEIKQAVEVREGDKFVKIEPDSQLSLNFTIDFNHPVIAKQAHHFVFSKTAYKEQVAKARTFGFLQEVNYLRSIGLAKGGSLNNCIVLDENSILNKEGLRCEKEFVCHKILDAMGDLMVLGMPVMGKYTSFSGSHKLNSMLVKAILADAKNYEVLIASDPAKEFALQKAFA.

His-75, His-232, and Asp-236 together coordinate Zn(2+). Catalysis depends on His-259, which acts as the Proton donor.

The protein belongs to the LpxC family. The cofactor is Zn(2+).

The enzyme catalyses a UDP-3-O-[(3R)-3-hydroxyacyl]-N-acetyl-alpha-D-glucosamine + H2O = a UDP-3-O-[(3R)-3-hydroxyacyl]-alpha-D-glucosamine + acetate. It functions in the pathway glycolipid biosynthesis; lipid IV(A) biosynthesis; lipid IV(A) from (3R)-3-hydroxytetradecanoyl-[acyl-carrier-protein] and UDP-N-acetyl-alpha-D-glucosamine: step 2/6. In terms of biological role, catalyzes the hydrolysis of UDP-3-O-myristoyl-N-acetylglucosamine to form UDP-3-O-myristoylglucosamine and acetate, the committed step in lipid A biosynthesis. In Helicobacter pylori (strain J99 / ATCC 700824) (Campylobacter pylori J99), this protein is UDP-3-O-acyl-N-acetylglucosamine deacetylase.